A 251-amino-acid polypeptide reads, in one-letter code: Cyclohexanol dehydrogenase (251 aa).

The NAD(+) site is built by Asp-42, Asn-95, Tyr-161, Lys-165, Ile-194, and Thr-196. The Proton acceptor role is filled by Tyr-161.

This sequence belongs to the short-chain dehydrogenases/reductases (SDR) family.

It catalyses the reaction cyclohexanol + NAD(+) = cyclohexanone + NADH + H(+). Its function is as follows. Catalyzes the oxidation of cyclohexanol to cyclohexanone. Required for the conversion of cyclohexanol to adipic acid. In Acinetobacter sp. (strain SE19), this protein is Cyclohexanol dehydrogenase.